The following is a 185-amino-acid chain: uncharacterized protein (185 aa).

The protein belongs to the EUO family.

This is an uncharacterized protein from Chlamydia muridarum (strain MoPn / Nigg).